Reading from the N-terminus, the 127-residue chain is Photosystem II reaction center Psb28 protein (127 aa).

Residues 107 to 127 form a disordered region; the sequence is GLGYSQNQNSDQTDGDANAEA. Residues 109–118 show a composition bias toward polar residues; it reads GYSQNQNSDQ.

Belongs to the Psb28 family. In terms of assembly, part of the photosystem II complex.

It is found in the cellular thylakoid membrane. The sequence is that of Photosystem II reaction center Psb28 protein from Parasynechococcus marenigrum (strain WH8102).